The primary structure comprises 425 residues: 3-phosphoshikimate 1-carboxyvinyltransferase (425 aa).

Residues K20, S21, and R25 each contribute to the 3-phosphoshikimate site. K20 provides a ligand contact to phosphoenolpyruvate. Phosphoenolpyruvate is bound by residues G92 and R120. 4 residues coordinate 3-phosphoshikimate: S165, Q167, D312, and K339. Residue Q167 coordinates phosphoenolpyruvate. Residue D312 is the Proton acceptor of the active site. 2 residues coordinate phosphoenolpyruvate: R343 and R385.

The protein belongs to the EPSP synthase family. Monomer.

The protein resides in the cytoplasm. It carries out the reaction 3-phosphoshikimate + phosphoenolpyruvate = 5-O-(1-carboxyvinyl)-3-phosphoshikimate + phosphate. It functions in the pathway metabolic intermediate biosynthesis; chorismate biosynthesis; chorismate from D-erythrose 4-phosphate and phosphoenolpyruvate: step 6/7. In terms of biological role, catalyzes the transfer of the enolpyruvyl moiety of phosphoenolpyruvate (PEP) to the 5-hydroxyl of shikimate-3-phosphate (S3P) to produce enolpyruvyl shikimate-3-phosphate and inorganic phosphate. This Alkaliphilus metalliredigens (strain QYMF) protein is 3-phosphoshikimate 1-carboxyvinyltransferase.